A 464-amino-acid chain; its full sequence is MAAAAASSCGGAGCGPHCSSSASAAAVEDAAAAAAEKVGRLSLSRECGKCGGGAAAVAVAGGLGLCGECFRANLLGKFKLAVTSNAMVRPTDSVLLAFSGGPASRVALQFIHEMRCKAIESWDVSNSQALPVFGVGVAFVDESVLCSKPRDEIEMAIEDIRSIVSSLSTGVKAMHIARLEDVFSTESEDGERRLREAVDMIGDDTGREDFLRCLRMLSLQKIAMENGYAKIMLGSCASAIACHVLSATVKGQGYSLPADVQYVDTRWEIPVVLPLRDCLAQELTLLCELDSLKTQQHLDRPSNGINSLVASFIKRLREENPSREHTIVRTAQKLKPFSFNKFSADGYHDFLPSRLRPKFQKFDSDESTFSEILCLMCGSPFSESELQNLESTKHKAQKKIDLYTAHCCQSCYFQILPAGENLNEHFFSLLPKLWTGKMDTISDSHSLLRDQIEEYLLEENDDGN.

Belongs to the CTU2/NCS2 family.

Its subcellular location is the cytoplasm. It participates in tRNA modification; 5-methoxycarbonylmethyl-2-thiouridine-tRNA biosynthesis. In terms of biological role, plays a central role in 2-thiolation of mcm(5)S(2)U at tRNA wobble positions of tRNA(Lys), tRNA(Glu) and tRNA(Gln). May act by forming a heterodimer with NCS6/CTU1 that ligates sulfur from thiocarboxylated URM1 onto the uridine of tRNAs at wobble position. The polypeptide is Cytoplasmic tRNA 2-thiolation protein 2 (Oryza sativa subsp. japonica (Rice)).